We begin with the raw amino-acid sequence, 479 residues long: Ribosomal RNA small subunit methyltransferase F (479 aa).

S-adenosyl-L-methionine contacts are provided by residues 125–131, Glu149, Asp176, and Asp194; that span reads AAAPGSK. Residue Cys247 is the Nucleophile of the active site.

This sequence belongs to the class I-like SAM-binding methyltransferase superfamily. RsmB/NOP family.

It localises to the cytoplasm. The enzyme catalyses cytidine(1407) in 16S rRNA + S-adenosyl-L-methionine = 5-methylcytidine(1407) in 16S rRNA + S-adenosyl-L-homocysteine + H(+). Functionally, specifically methylates the cytosine at position 1407 (m5C1407) of 16S rRNA. The sequence is that of Ribosomal RNA small subunit methyltransferase F from Salmonella typhi.